The primary structure comprises 782 residues: Protein bicaudal D (782 aa).

Positions 15 to 77 (VQDLQMEVER…RHELDITQEA (63 aa)) form a coiled coil. Serine 103 carries the post-translational modification Phosphoserine. A coiled-coil region spans residues 107-249 (ETSLNLQIFD…LETLQGEREA (143 aa)). Residues serine 285, serine 288, and serine 305 each carry the phosphoserine modification. The residue at position 306 (threonine 306) is a Phosphothreonine. Serine 310 carries the post-translational modification Phosphoserine. 2 coiled-coil regions span residues 320-368 (SEIH…FMSR) and 444-477 (TTTL…TLTH). Serine 528 carries the phosphoserine modification. 2 coiled-coil regions span residues 603–630 (EKVN…KREQ) and 695–743 (CEEY…MEMD). The interval 699-722 (VTQVDDLNRQLEAAEEEKKTLNQL) is interaction with Rab6. The tract at residues 744–782 (REMRHVRRPMPAQRGTSGKSSFSTRPSSRNPASSNANPF) is disordered. The span at 757–767 (RGTSGKSSFST) shows a compositional bias: polar residues. Residues 768–782 (RPSSRNPASSNANPF) are compositionally biased toward low complexity.

This sequence belongs to the BicD family. In terms of assembly, may homodimerize but does not interact with BicDR. Interacts (via C-terminal domain) with Rab6. In terms of tissue distribution, in ovaries, expressed in oocyte and nurse cells.

The protein resides in the cytoplasm. Its subcellular location is the cytoskeleton. Functionally, this protein is essential for differentiation. It may play a role in localizing of Nanos (a maternal determinant) activity in oocytes. Functions redundantly with BicDR. During oogenesis, plays a specific role, together with Rab6 but independently of Sec5, in the polarization of the oocyte microtubule cytoskeleton, in oskar mRNA localization and in the anterodorsal secretion of grk. Plays a role in the biogenesis of annulate lamellae containing nuclear pore complex components. During macrochaetae development, together with BicDR, involved in Rab 6 and Spn-F stability and distribution and actin cytoskeleton organization. The chain is Protein bicaudal D from Drosophila melanogaster (Fruit fly).